The primary structure comprises 470 residues: Chitin deacetylase 1 (470 aa).

The N-terminal stretch at 1–19 (MFTFAAFSALLISLAGVVA) is a signal peptide. N-linked (GlcNAc...) asparagine glycans are attached at residues Asn-101 and Asn-121. Cys-155 and Cys-363 are joined by a disulfide. The 200-residue stretch at 159-358 (NVWGLSYDDG…VLANGTYQLK (200 aa)) folds into the NodB homology domain. The active-site Proton acceptor is the Asp-166. Asp-166 lines the acetate pocket. Asp-167, His-216, and His-220 together coordinate Co(2+). Tyr-257 contacts acetate. His-331 acts as the Proton donor in catalysis. Asn-352, Asn-378, and Asn-440 each carry an N-linked (GlcNAc...) asparagine glycan. A disordered region spans residues 406-447 (EVSAPSEATGSTAAGSAASTTSGSGASASTGAASNTSSSGSG). Residues 408 to 447 (SAPSEATGSTAAGSAASTTSGSGASASTGAASNTSSSGSG) show a composition bias toward low complexity. Ser-444 carries the GPI-anchor amidated serine lipid modification. The propeptide at 445 to 470 (GSGRSATMGGALIALAAVAVGMVYVA) is removed in mature form.

The protein belongs to the polysaccharide deacetylase family. Co(2+) is required as a cofactor.

The protein resides in the secreted. Its subcellular location is the cell wall. It localises to the cell membrane. The catalysed reaction is [(1-&gt;4)-N-acetyl-beta-D-glucosaminyl](n) + n H2O = chitosan + n acetate. In terms of biological role, hydrolyzes the N-acetamido groups of N-acetyl-D-glucosamine residues in chitin to form chitosan and acetate. Chitosan is required to anchor melanin to the cell wall, for maintenance of cell wall integrity, and for proper cytokinesis. Plays a major role in synthesizing cell wall chitosan during host infection; chitosan offers an advantage during infection as it is less readily detected than chitin by host immunosurveillance mechanisms. This chain is Chitin deacetylase 1, found in Cryptococcus neoformans var. grubii serotype A (strain H99 / ATCC 208821 / CBS 10515 / FGSC 9487) (Filobasidiella neoformans var. grubii).